The sequence spans 282 residues: Putative sugar uptake protein lp_2594 (282 aa).

10 consecutive transmembrane segments (helical) span residues 2-21 (IFLI…LLVG), 31-48 (MFGM…FWLF), 53-75 (VTIS…IGQL), 90-112 (MPIS…FGEW), 119-136 (ILGL…ALSA), 146-163 (FSCY…WIYS), 176-194 (LFLP…WAIY), 209-226 (TLPG…ILSA), 233-252 (NAYI…GLFF), and 262-281 (IVSV…TTAL).

This sequence belongs to the GRP transporter (TC 2.A.7.5) family.

Its subcellular location is the cell membrane. This Lactiplantibacillus plantarum (strain ATCC BAA-793 / NCIMB 8826 / WCFS1) (Lactobacillus plantarum) protein is Putative sugar uptake protein lp_2594.